A 313-amino-acid chain; its full sequence is uncharacterized protein (313 aa).

2 disordered regions span residues 24–53 and 190–291; these read EEGE…PTPN and TALS…PCAR. Over residues 211–229 the composition is skewed to polar residues; it reads TQNYVLKLQLSSPNSQPMS. Residues 239–260 are compositionally biased toward low complexity; that stretch reads SCSSSNCSSSSSSSACSSVSIS. Over residues 261–284 the composition is skewed to polar residues; that stretch reads DPNNITAYETNNVNPQFPSNQPLD.

This is an uncharacterized protein from Saccharomyces cerevisiae (strain ATCC 204508 / S288c) (Baker's yeast).